We begin with the raw amino-acid sequence, 300 residues long: Aspartate carbamoyltransferase catalytic subunit (300 aa).

2 residues coordinate carbamoyl phosphate: arginine 54 and threonine 55. Lysine 82 serves as a coordination point for L-aspartate. Arginine 104, histidine 131, and glutamine 134 together coordinate carbamoyl phosphate. The L-aspartate site is built by arginine 164 and arginine 213. Residues alanine 256 and proline 257 each coordinate carbamoyl phosphate.

Belongs to the aspartate/ornithine carbamoyltransferase superfamily. ATCase family. In terms of assembly, heterododecamer (2C3:3R2) of six catalytic PyrB chains organized as two trimers (C3), and six regulatory PyrI chains organized as three dimers (R2).

The enzyme catalyses carbamoyl phosphate + L-aspartate = N-carbamoyl-L-aspartate + phosphate + H(+). Its pathway is pyrimidine metabolism; UMP biosynthesis via de novo pathway; (S)-dihydroorotate from bicarbonate: step 2/3. Its function is as follows. Catalyzes the condensation of carbamoyl phosphate and aspartate to form carbamoyl aspartate and inorganic phosphate, the committed step in the de novo pyrimidine nucleotide biosynthesis pathway. The sequence is that of Aspartate carbamoyltransferase catalytic subunit from Malacoplasma penetrans (strain HF-2) (Mycoplasma penetrans).